The primary structure comprises 393 residues: Staphopain B (393 aa).

The signal sequence occupies residues 1–36 (MNSSCKTRVFNIISIIMVSMLILSLGAFANNNKAKA). A propeptide spanning residues 37–219 (DSHSKQLEIN…KVEENEAIQE (183 aa)) is cleaved from the precursor. Catalysis depends on residues Cys-243, His-340, and Asn-360.

It belongs to the peptidase C47 family. As to quaternary structure, in the cytoplasm, prematurely activated/folded SspB forms a stable non-covalent complex with SspC. In terms of processing, proteolytically cleaved by staphylococcal serine protease (SspA).

Its subcellular location is the secreted. Its activity is regulated as follows. Prematurely activated/folded staphopain B is inhibited by staphostatin B (SspC), which is probably required to protect staphylococcal cytoplasmic proteins from degradation by SspB. In terms of biological role, cysteine protease that plays an important role in the inhibition of host innate immune response. Degrades host elastin, fibrogen, fibronectin and kininogen. Blocks phagocytosis of opsonised S.aureus by neutrophils and monocytes by inducing their death in a proteolytic activity-dependent manner. Decreases surface expression of the 'don't eat me' signal CD31 on neutrophils. Cleaves host galectin-3/LGALS3, thereby inhibiting the neutrophil-activating ability of the lectin. This Staphylococcus aureus protein is Staphopain B (sspB).